A 418-amino-acid chain; its full sequence is Tyrosine--tRNA ligase 1 (418 aa).

Tyrosine 34 is a binding site for L-tyrosine. The 'HIGH' region signature appears at proline 39–histidine 48. Residues tyrosine 169 and glutamine 173 each coordinate L-tyrosine. The 'KMSKS' region signature appears at lysine 229–serine 233. Lysine 232 is a binding site for ATP. One can recognise an S4 RNA-binding domain in the interval leucine 352–tyrosine 418.

Belongs to the class-I aminoacyl-tRNA synthetase family. TyrS type 1 subfamily. Homodimer.

It localises to the cytoplasm. It carries out the reaction tRNA(Tyr) + L-tyrosine + ATP = L-tyrosyl-tRNA(Tyr) + AMP + diphosphate + H(+). Its function is as follows. Catalyzes the attachment of tyrosine to tRNA(Tyr) in a two-step reaction: tyrosine is first activated by ATP to form Tyr-AMP and then transferred to the acceptor end of tRNA(Tyr). The polypeptide is Tyrosine--tRNA ligase 1 (Streptococcus thermophilus (strain CNRZ 1066)).